The chain runs to 48 residues: uncharacterized protein (48 aa).

The interval 1–20 (MLLKNWPSRRIQRDKSKRAG) is disordered.

This is an uncharacterized protein from Bacillus subtilis (strain 168).